Consider the following 306-residue polypeptide: Oligopeptide transport system permease protein OppB (306 aa).

At 1–12 the chain is on the cytoplasmic side; it reads MLKFILRRCLEA. The helical transmembrane segment at 13-30 threads the bilayer; that stretch reads IPTLFILITISFFMMRLA. The Periplasmic segment spans residues 31–101; sequence PGSPFTGERA…ASFPVSAKLG (71 aa). The 200-residue stretch at 94 to 293 folds into the ABC transmembrane type-1 domain; it reads FPVSAKLGAA…ALTILFNAIV (200 aa). The chain crosses the membrane as a helical span at residues 102-121; sequence AAAFLLAVIIGVSAGVIAAL. Over 122–133 the chain is Cytoplasmic; it reads KQNTRWDYTVMG. A helical membrane pass occupies residues 134-156; sequence FAMTGVVIPSFVVAPLLVMVFAI. Over 157 to 165 the chain is Periplasmic; the sequence is TLQWLPGGG. A helical membrane pass occupies residues 166–188; it reads WNGGALKFMILPMVALSLAYIAS. The Cytoplasmic segment spans residues 189 to 227; it reads IARITRGSMIEVLHSNFIRTARAKGLPMRRIIFRHALKP. The chain crosses the membrane as a helical span at residues 228 to 250; sequence ALLPVLSYMGPAFVGIITGSMVI. The Periplasmic segment spans residues 251–277; sequence ETIYGLPGIGQLFVNGALNRDYSLVLS. The chain crosses the membrane as a helical span at residues 278–300; sequence LTILVGALTILFNAIVDVLYAVI. At 301-306 the chain is on the cytoplasmic side; the sequence is DPKIRY.

The protein belongs to the binding-protein-dependent transport system permease family. OppBC subfamily. In terms of assembly, the complex is composed of two ATP-binding proteins (OppD and OppF), two transmembrane proteins (OppB and OppC) and a solute-binding protein (OppA).

The protein localises to the cell inner membrane. Functionally, part of the ABC transporter complex OppABCDF involved in the uptake of oligopeptides, including the cell wall murein tripeptide L-alanyl-gamma-D-glutamyl-meso-diaminopimelate. Responsible for the translocation of the substrate across the membrane. Plays an important nutritional role and is involved in the recycling of cell wall peptides. This chain is Oligopeptide transport system permease protein OppB, found in Salmonella typhimurium (strain LT2 / SGSC1412 / ATCC 700720).